The chain runs to 89 residues: Barrier-to-autointegration factor (89 aa).

The residue at position 1 (Met-1) is an N-acetylmethionine. At Thr-2 the chain carries N-acetylthreonine; in Barrier-to-autointegration factor, N-terminally processed. A phosphothreonine; by VRK1 and VRK2 mark is found at Thr-2 and Thr-3. Position 4 is a phosphoserine; by VRK1 and VRK2 (Ser-4). One can recognise a HhH domain in the interval 20–35; that stretch reads VGSLAGIGEVLGKKLE.

It belongs to the BAF family. Homodimer. Heterodimerizes with BANF2. Interacts with ANKLE2/LEM4, leading to decreased phosphorylation by VRK1 and promoting dephosphorylation by protein phosphatase 2A (PP2A). Binds non-specifically to double-stranded DNA, and is found as a hexamer or dodecamer upon DNA binding. Binds to LEM domain-containing nuclear proteins such as LEMD3/MAN1, TMPO/LAP2 and EMD (emerin). Interacts with ANKLE1 (via LEM domain); the interaction may favor BANF1 dimerization. Interacts with CRX and LMNA (lamin-A). Binds linker histone H1.1 and core histones H3. Interacts with LEMD2 (via LEM domain). Interacts with PARP1; interaction takes place in response to oxidative DNA damage. Ser-4 is the major site of phosphorylation as compared to Thr-2 and Thr-3. Phosphorylation on Thr-2; Thr-3 and Ser-4 disrupts its ability to bind DNA and reduces its ability to bind LEM domain-containing proteins. Non phosphorylated BAF seems to enhance binding between EMD and LMNA. Dephosphorylated by protein phosphatase 2A (PP2A) following interaction with ANKLE2/LEM4 during mitotic exit, leading to mitotic nuclear envelope reassembly.

Its subcellular location is the nucleus. It is found in the chromosome. The protein resides in the nucleus envelope. The protein localises to the cytoplasm. Its function is as follows. Non-specific DNA-binding protein that plays key roles in mitotic nuclear reassembly, chromatin organization, DNA damage response, gene expression and intrinsic immunity against foreign DNA. Contains two non-specific double-stranded DNA (dsDNA)-binding sites which promote DNA cross-bridging. Plays a key role in nuclear membrane reformation at the end of mitosis by driving formation of a single nucleus in a spindle-independent manner. Transiently cross-bridges anaphase chromosomes via its ability to bridge distant DNA sites, leading to the formation of a dense chromatin network at the chromosome ensemble surface that limits membranes to the surface. Also acts as a negative regulator of innate immune activation by restricting CGAS activity toward self-DNA upon acute loss of nuclear membrane integrity. Outcompetes CGAS for DNA-binding, thereby preventing CGAS activation and subsequent damaging autoinflammatory responses. Also involved in DNA damage response: interacts with PARP1 in response to oxidative stress, thereby inhibiting the ADP-ribosyltransferase activity of PARP1. Involved in the recognition of exogenous dsDNA in the cytosol: associates with exogenous dsDNA immediately after its appearance in the cytosol at endosome breakdown and is required to avoid autophagy. In case of poxvirus infection, has an antiviral activity by blocking viral DNA replication. This Bos taurus (Bovine) protein is Barrier-to-autointegration factor (BANF1).